The primary structure comprises 442 residues: F-box only protein 39 (442 aa).

The F-box domain occupies 16–61 (WAFLPDLCLCRVFWWLGDRDRSRAALVCRKWNQMMYSAELWRYRTI).

In terms of assembly, directly interacts with SKP1 and CUL1.

Its function is as follows. Substrate-recognition component of the SCF (SKP1-CUL1-F-box protein)-type E3 ubiquitin ligase complex. This chain is F-box only protein 39 (FBXO39), found in Homo sapiens (Human).